We begin with the raw amino-acid sequence, 72 residues long: uncharacterized protein (72 aa).

The first 17 residues, 1-17 (MSLGLAIAVGIVLGVVA), serve as a signal peptide directing secretion.

This is an uncharacterized protein from Schizosaccharomyces pombe (strain 972 / ATCC 24843) (Fission yeast).